A 357-amino-acid chain; its full sequence is Holliday junction branch migration complex subunit RuvB (357 aa).

Low complexity predominate over residues 1 to 15 (MAIQSDSLSSLPDSP). A disordered region spans residues 1–30 (MAIQSDSLSSLPDSPRIVAPQPVSPNEESI). The segment at 13–195 (DSPRIVAPQP…FGIVSRLEFY (183 aa)) is large ATPase domain (RuvB-L). ATP is bound by residues leucine 34, arginine 35, glycine 76, lysine 79, threonine 80, threonine 81, 142–144 (EDF), arginine 185, tyrosine 195, and arginine 232. Position 80 (threonine 80) interacts with Mg(2+). The tract at residues 196 to 266 (NTDELARIVT…AAGRALAMLD (71 aa)) is small ATPAse domain (RuvB-S). Residues 269–357 (PQGLDVMDRK…SGGTGELFSK (89 aa)) are head domain (RuvB-H). 3 residues coordinate DNA: arginine 305, arginine 324, and arginine 329.

The protein belongs to the RuvB family. As to quaternary structure, homohexamer. Forms an RuvA(8)-RuvB(12)-Holliday junction (HJ) complex. HJ DNA is sandwiched between 2 RuvA tetramers; dsDNA enters through RuvA and exits via RuvB. An RuvB hexamer assembles on each DNA strand where it exits the tetramer. Each RuvB hexamer is contacted by two RuvA subunits (via domain III) on 2 adjacent RuvB subunits; this complex drives branch migration. In the full resolvosome a probable DNA-RuvA(4)-RuvB(12)-RuvC(2) complex forms which resolves the HJ.

It localises to the cytoplasm. It carries out the reaction ATP + H2O = ADP + phosphate + H(+). In terms of biological role, the RuvA-RuvB-RuvC complex processes Holliday junction (HJ) DNA during genetic recombination and DNA repair, while the RuvA-RuvB complex plays an important role in the rescue of blocked DNA replication forks via replication fork reversal (RFR). RuvA specifically binds to HJ cruciform DNA, conferring on it an open structure. The RuvB hexamer acts as an ATP-dependent pump, pulling dsDNA into and through the RuvAB complex. RuvB forms 2 homohexamers on either side of HJ DNA bound by 1 or 2 RuvA tetramers; 4 subunits per hexamer contact DNA at a time. Coordinated motions by a converter formed by DNA-disengaged RuvB subunits stimulates ATP hydrolysis and nucleotide exchange. Immobilization of the converter enables RuvB to convert the ATP-contained energy into a lever motion, pulling 2 nucleotides of DNA out of the RuvA tetramer per ATP hydrolyzed, thus driving DNA branch migration. The RuvB motors rotate together with the DNA substrate, which together with the progressing nucleotide cycle form the mechanistic basis for DNA recombination by continuous HJ branch migration. Branch migration allows RuvC to scan DNA until it finds its consensus sequence, where it cleaves and resolves cruciform DNA. In Bordetella bronchiseptica (strain ATCC BAA-588 / NCTC 13252 / RB50) (Alcaligenes bronchisepticus), this protein is Holliday junction branch migration complex subunit RuvB.